We begin with the raw amino-acid sequence, 228 residues long: Ribosomal RNA small subunit methyltransferase G (228 aa).

S-adenosyl-L-methionine is bound by residues Gly89, Leu94, 140–141 (VE), and Arg159.

The protein belongs to the methyltransferase superfamily. RNA methyltransferase RsmG family.

It is found in the cytoplasm. It catalyses the reaction guanosine(527) in 16S rRNA + S-adenosyl-L-methionine = N(7)-methylguanosine(527) in 16S rRNA + S-adenosyl-L-homocysteine. Specifically methylates the N7 position of guanine in position 527 of 16S rRNA. The chain is Ribosomal RNA small subunit methyltransferase G from Burkholderia multivorans (strain ATCC 17616 / 249).